We begin with the raw amino-acid sequence, 354 residues long: MRVADFTFELPDSLIARHPLAERRSSRLLTLDGPTGALAHRQFTDLLEHLRSGDLMVFNNTRVIPARLFGQKASGGKLEILVERVLDSHRVLAHVRASKSPKPGSSILIDGGGEAEMVARHDALFELRFAEEVLPLLDRVGHMPLPPYIDRPDEGADRERYQTVYAQRAGAVAAPTAGLHFDQPLMEAIAAKGVETAFVTLHVGAGTFQPVRVEQIEDHHMHSEWLEVSQDVVDAVAACRARGGRVIAVGTTSVRSLESAARDGQLKPFSGDTDIFIYPGRPFHVVDALVTNFHLPESTLLMLVSAFAGYPETMAAYAAAIEHGYRFFSYGDAMFITRNPAPTAPQESAPEDHA.

The protein belongs to the QueA family. Monomer.

It is found in the cytoplasm. It carries out the reaction 7-aminomethyl-7-carbaguanosine(34) in tRNA + S-adenosyl-L-methionine = epoxyqueuosine(34) in tRNA + adenine + L-methionine + 2 H(+). The protein operates within tRNA modification; tRNA-queuosine biosynthesis. In terms of biological role, transfers and isomerizes the ribose moiety from AdoMet to the 7-aminomethyl group of 7-deazaguanine (preQ1-tRNA) to give epoxyqueuosine (oQ-tRNA). The polypeptide is S-adenosylmethionine:tRNA ribosyltransferase-isomerase (Pseudomonas syringae pv. tomato (strain ATCC BAA-871 / DC3000)).